The following is a 188-amino-acid chain: Acireductone dioxygenase 1 (188 aa).

Residues histidine 90, histidine 92, glutamate 96, and histidine 135 each contribute to the Fe(2+) site. Residues histidine 90, histidine 92, glutamate 96, and histidine 135 each contribute to the Ni(2+) site.

The protein belongs to the acireductone dioxygenase (ARD) family. Fe(2+) serves as cofactor. It depends on Ni(2+) as a cofactor.

It localises to the cytoplasm. Its subcellular location is the nucleus. The catalysed reaction is 1,2-dihydroxy-5-(methylsulfanyl)pent-1-en-3-one + O2 = 4-methylsulfanyl-2-oxobutanoate + formate + 2 H(+). It carries out the reaction 1,2-dihydroxy-5-(methylsulfanyl)pent-1-en-3-one + O2 = 3-(methylsulfanyl)propanoate + CO + formate + 2 H(+). Its pathway is amino-acid biosynthesis; L-methionine biosynthesis via salvage pathway; L-methionine from S-methyl-5-thio-alpha-D-ribose 1-phosphate: step 5/6. Catalyzes 2 different reactions between oxygen and the acireductone 1,2-dihydroxy-3-keto-5-methylthiopentene (DHK-MTPene) depending upon the metal bound in the active site. Fe-containing acireductone dioxygenase (Fe-ARD) produces formate and 2-keto-4-methylthiobutyrate (KMTB), the alpha-ketoacid precursor of methionine in the methionine recycle pathway. Ni-containing acireductone dioxygenase (Ni-ARD) produces methylthiopropionate, carbon monoxide and formate, and does not lie on the methionine recycle pathway. This Vitis vinifera (Grape) protein is Acireductone dioxygenase 1.